Here is a 410-residue protein sequence, read N- to C-terminus: Imidazolonepropionase (410 aa).

Residues histidine 71 and histidine 73 each coordinate Fe(3+). Zn(2+) is bound by residues histidine 71 and histidine 73. Residues arginine 80, tyrosine 143, and histidine 175 each coordinate 4-imidazolone-5-propanoate. Residue tyrosine 143 coordinates N-formimidoyl-L-glutamate. Histidine 235 contacts Fe(3+). Position 235 (histidine 235) interacts with Zn(2+). Glutamate 238 lines the 4-imidazolone-5-propanoate pocket. Aspartate 309 contributes to the Fe(3+) binding site. Residue aspartate 309 coordinates Zn(2+).

This sequence belongs to the metallo-dependent hydrolases superfamily. HutI family. Zn(2+) serves as cofactor. Requires Fe(3+) as cofactor.

The protein localises to the cytoplasm. The catalysed reaction is 4-imidazolone-5-propanoate + H2O = N-formimidoyl-L-glutamate. It functions in the pathway amino-acid degradation; L-histidine degradation into L-glutamate; N-formimidoyl-L-glutamate from L-histidine: step 3/3. Its function is as follows. Catalyzes the hydrolytic cleavage of the carbon-nitrogen bond in imidazolone-5-propanoate to yield N-formimidoyl-L-glutamate. It is the third step in the universal histidine degradation pathway. In Thermoplasma acidophilum (strain ATCC 25905 / DSM 1728 / JCM 9062 / NBRC 15155 / AMRC-C165), this protein is Imidazolonepropionase.